The sequence spans 225 residues: Lectin (225 aa).

As to quaternary structure, homotetramer.

In terms of biological role, chitin-binding lectin. Agglutinates rabbit erythrocytes, but not human erythrocytes. The polypeptide is Lectin (Vachellia farnesiana (Sweet acacia)).